A 460-amino-acid chain; its full sequence is Chromosomal replication initiator protein DnaA (460 aa).

The tract at residues 1–84 is domain I, interacts with DnaA modulators; the sequence is MAVSLWQQCI…RFDIGSRPSA (84 aa). The domain II stretch occupies residues 84 to 123; it reads AKKPEPAPVAAVRVPSPQTKASVGTAFNTTEPVANTNHRS. Positions 124–340 are domain III, AAA+ region; the sequence is NINPTYQFDN…GALNRVIANA (217 aa). ATP contacts are provided by glycine 168, glycine 170, lysine 171, and threonine 172. A domain IV, binds dsDNA region spans residues 341–460; it reads NFTGRPITID…YANLIRTLSS (120 aa).

This sequence belongs to the DnaA family. In terms of assembly, oligomerizes as a right-handed, spiral filament on DNA at oriC.

Its subcellular location is the cytoplasm. In terms of biological role, plays an essential role in the initiation and regulation of chromosomal replication. ATP-DnaA binds to the origin of replication (oriC) to initiate formation of the DNA replication initiation complex once per cell cycle. Binds the DnaA box (a 9 base pair repeat at the origin) and separates the double-stranded (ds)DNA. Forms a right-handed helical filament on oriC DNA; dsDNA binds to the exterior of the filament while single-stranded (ss)DNA is stabiized in the filament's interior. The ATP-DnaA-oriC complex binds and stabilizes one strand of the AT-rich DNA unwinding element (DUE), permitting loading of DNA polymerase. After initiation quickly degrades to an ADP-DnaA complex that is not apt for DNA replication. Binds acidic phospholipids. This is Chromosomal replication initiator protein DnaA from Shewanella oneidensis (strain ATCC 700550 / JCM 31522 / CIP 106686 / LMG 19005 / NCIMB 14063 / MR-1).